The primary structure comprises 183 residues: Maltose O-acetyltransferase (183 aa).

N83 lines the acetyl-CoA pocket. H113 functions as the Proton donor/acceptor in the catalytic mechanism. Acetyl-CoA-binding positions include G140, S158, 163 to 164 (TK), R178, and K181.

This sequence belongs to the transferase hexapeptide repeat family. Homodimer.

The enzyme catalyses D-maltose + acetyl-CoA = 1-O-acetylmaltose + CoA. Catalyzes the CoA-dependent transfer of an acetyl group to maltose and other sugars. Acetylates glucose exclusively at the C6 position and maltose at the C6 position of the non-reducing end glucosyl moiety. Is able to acetylate maltooligosaccharides. In Escherichia coli (strain K12), this protein is Maltose O-acetyltransferase (maa).